A 98-amino-acid chain; its full sequence is Beta-elicitin MGM-beta (98 aa).

Disulfide bonds link Cys-3–Cys-71, Cys-27–Cys-56, and Cys-51–Cys-95.

The protein belongs to the elicitin family.

It localises to the secreted. Induces local and distal defense responses (incompatible hypersensitive reaction) in plants from the solanaceae and cruciferae families. Elicits leaf necrosis and causes the accumulation of pathogenesis-related proteins. Might interact with the lipidic molecules of the plasma membrane. In Phytophthora megasperma (Potato pink rot fungus), this protein is Beta-elicitin MGM-beta.